The primary structure comprises 483 residues: MTIGWHFDNSYSRLPKTFKENINPVAVNAPEILILNKDLANKLDLDFSNINDDDLSKIFSGNLLPEGSNSIAQAYAGHQFGHFTMLGDGRAVLIGEHLTKNNERFDIQFKGSGRTPFSRSGDGRAVLGPMLREYIISEAMHFLKIPTTRSLAVVKTGEDVVREQISQGAILTRVALGHLRVGTFQYIAAKQNISDLEILINYTIEKYYPNIKSSKNKALDLLNVLIEKQTQLVIDWMRVGFIHGVMNTDNMSISGETIDYGPCAFMDVYDPKTVFSSIDQLGRYAYENQPKITKWNLTRFAECLIPLISTNEDEAIKLATEALDKFEQNYETKWLNMMRDKLGLYGEDKEDKNLIMELLNWMKEKKADYTNTFIFLMNKTIKNSEVYDNADFDLWKTKWMKRLVMFGNTHDKSVDLMSSCNPMVIPRNHKIEEALMLANNGDLTLFNKLIKILKNPYLVNNGDLELMSPAPHSDEKYQTFCGT.

ATP-binding residues include glycine 87, glycine 89, arginine 90, lysine 110, aspartate 122, glycine 123, arginine 173, and arginine 180. Catalysis depends on aspartate 249, which acts as the Proton acceptor. Asparagine 250 and aspartate 259 together coordinate Mg(2+). ATP is bound at residue aspartate 259.

The protein belongs to the SELO family. Mg(2+) serves as cofactor. Mn(2+) is required as a cofactor.

It catalyses the reaction L-seryl-[protein] + ATP = 3-O-(5'-adenylyl)-L-seryl-[protein] + diphosphate. The catalysed reaction is L-threonyl-[protein] + ATP = 3-O-(5'-adenylyl)-L-threonyl-[protein] + diphosphate. The enzyme catalyses L-tyrosyl-[protein] + ATP = O-(5'-adenylyl)-L-tyrosyl-[protein] + diphosphate. It carries out the reaction L-histidyl-[protein] + UTP = N(tele)-(5'-uridylyl)-L-histidyl-[protein] + diphosphate. It catalyses the reaction L-seryl-[protein] + UTP = O-(5'-uridylyl)-L-seryl-[protein] + diphosphate. The catalysed reaction is L-tyrosyl-[protein] + UTP = O-(5'-uridylyl)-L-tyrosyl-[protein] + diphosphate. Functionally, nucleotidyltransferase involved in the post-translational modification of proteins. It can catalyze the addition of adenosine monophosphate (AMP) or uridine monophosphate (UMP) to a protein, resulting in modifications known as AMPylation and UMPylation. The chain is Protein nucleotidyltransferase YdiU from Pelagibacter ubique (strain HTCC1062).